The chain runs to 300 residues: MILLEVNNRIIEEILTLKFENAAAGNKPEAVEVTFADFDGVLYHVSNPNGDKAKVLISISLKFYKELQEHGTDEVLKKVYGNFLVAPESGYNVSLLYDLESLPSNKDSVIHQAGMLKRNCFASVFEKYFKFQEEGKDGEKRAVIHYRDDETMYVEAKKDRVTVVFSTVFKDDDDVVIGKVFMQEFKEGRRASHTAPQVLFSHREPPLELKDTDAAVGDNIGYITFVLFPRHTNANARDNTINLIHTFRDYLHYHIKCSKAYIHTRMRAKTSDFLKVLNRARPDAEKKEMKTITGKTFAAR.

The protein belongs to the ARPC2 family. As to quaternary structure, component of the Arp2/3 complex composed of actr2/arp2, actr3/arp3, arpc1 (arpc1a or arpc1b), arpc2, arpc3, arpc4 and arpc5.

It is found in the cytoplasm. The protein resides in the cytoskeleton. The protein localises to the cell projection. Its subcellular location is the nucleus. Actin-binding component of the Arp2/3 complex, a multiprotein complex that mediates actin polymerization upon stimulation by nucleation-promoting factor (NPF). The Arp2/3 complex mediates the formation of branched actin networks in the cytoplasm, providing the force for cell motility. In addition to its role in the cytoplasmic cytoskeleton, the Arp2/3 complex also promotes actin polymerization in the nucleus, thereby regulating gene transcription and repair of damaged DNA. The Arp2/3 complex promotes homologous recombination (HR) repair in response to DNA damage by promoting nuclear actin polymerization, leading to drive motility of double-strand breaks (DSBs). This is Actin-related protein 2/3 complex subunit 2-A (arpc2-a) from Xenopus laevis (African clawed frog).